Here is a 374-residue protein sequence, read N- to C-terminus: Alcohol dehydrogenase class-3 (374 aa).

Ala-2 carries the N-acetylalanine modification. 7 residues coordinate Zn(2+): Cys-45, His-67, Cys-97, Cys-100, Cys-103, Cys-111, and Cys-174. At Lys-233 the chain carries N6-succinyllysine. Ser-247 carries the phosphoserine modification. Lys-315 is modified (N6-succinyllysine). Residues Ser-324 and Ser-351 each carry the phosphoserine modification.

It belongs to the zinc-containing alcohol dehydrogenase family. Class-III subfamily. Homodimer. Zn(2+) serves as cofactor.

Its subcellular location is the cytoplasm. The catalysed reaction is a primary alcohol + NAD(+) = an aldehyde + NADH + H(+). It catalyses the reaction a secondary alcohol + NAD(+) = a ketone + NADH + H(+). The enzyme catalyses S-(hydroxymethyl)glutathione + NADP(+) = S-formylglutathione + NADPH + H(+). It carries out the reaction S-(hydroxymethyl)glutathione + NAD(+) = S-formylglutathione + NADH + H(+). The catalysed reaction is 20-oxo-(5Z,8Z,11Z,14Z)-eicosatetraenoate + NAD(+) + H2O = (5Z,8Z,11Z,14Z)-eicosatetraenedioate + NADH + 2 H(+). It catalyses the reaction 20-hydroxy-(5Z,8Z,11Z,14Z)-eicosatetraenoate + NAD(+) = 20-oxo-(5Z,8Z,11Z,14Z)-eicosatetraenoate + NADH + H(+). The enzyme catalyses S-nitrosoglutathione + NADH + H(+) = S-(hydroxysulfenamide)glutathione + NAD(+). Its function is as follows. Catalyzes the oxidation of long-chain primary alcohols and the oxidation of S-(hydroxymethyl) glutathione. Also oxidizes long chain omega-hydroxy fatty acids, such as 20-HETE, producing both the intermediate aldehyde, 20-oxoarachidonate and the end product, a dicarboxylic acid, (5Z,8Z,11Z,14Z)-eicosatetraenedioate. Class-III ADH is remarkably ineffective in oxidizing ethanol. Required for clearance of cellular formaldehyde, a cytotoxic and carcinogenic metabolite that induces DNA damage. Also acts as a S-nitroso-glutathione reductase by catalyzing the NADH-dependent reduction of S-nitrosoglutathione, thereby regulating protein S-nitrosylation. This is Alcohol dehydrogenase class-3 from Oryctolagus cuniculus (Rabbit).